Consider the following 333-residue polypeptide: MSRMISLREAETLAVAALEAVGVPRWEAEVTARALIDAERDGLASHGLSRLPFYLAQARSGKVVADAQARVEVAGSVIRVDARHGLAFPAIARGVERAIPLARELGLVAVAIGGSHHFGVAGAPVERLAREGLVAMAFSNAPSAMAPWGGKRPLYGTNPIAFATPRRGTDPLVIDLSLSKVARGKVMLAKKAGEPIPEGWALDIEGRPTTDPDAAIAGSMVPAGDAKGASLALMVELLTAGLTGSHFGFQASSFFEPEGEAPSVGHLMLAFDPAHFSDGYLEHIEALFQAMLEQEGVRLPGTRRHALRRERGESLELPEAVVDELRAYAVSRV.

The protein belongs to the LDH2/MDH2 oxidoreductase family.

It carries out the reaction (2R)-3-sulfolactate + NADP(+) = 3-sulfopyruvate + NADPH + H(+). In terms of biological role, catalyzes the reduction of sulfopyruvate to (R)-sulfolactate. Together with SlcC, provides a racemase system that converts (2S)-3-sulfolactate to (2R)-3-sulfolactate, which is degraded further by (2R)-sulfolactate sulfo-lyase. This is (2R)-3-sulfolactate dehydrogenase (NADP(+)) (comC) from Chromohalobacter salexigens (strain ATCC BAA-138 / DSM 3043 / CIP 106854 / NCIMB 13768 / 1H11).